The chain runs to 95 residues: Small integral membrane protein 26 (95 aa).

The chain crosses the membrane as a helical span at residues 13–35 (MSVVYGIGTWSVLGSLLYYSRTM).

Belongs to the SMIM26 family. In terms of assembly, interacts with AGK and SLC25A11. In terms of tissue distribution, detected in kidney (at protein level).

The protein localises to the mitochondrion outer membrane. May play a role in cell viability. The chain is Small integral membrane protein 26 from Homo sapiens (Human).